A 451-amino-acid chain; its full sequence is Phenolic glucoside malonyltransferase 2 (451 aa).

The Proton acceptor role is filled by His165. The HXXXD motif signature appears at His165 to Asp169. Malonyl-CoA-binding positions include His270 and Ser272–Thr273. Asp395 serves as the catalytic Proton acceptor. Residues Asp395 to Gly399 carry the DFGWG motif motif.

This sequence belongs to the plant acyltransferase family. Phenolic glucoside malonyltransferase subfamily.

The enzyme catalyses a flavonol 7-O-beta-D-glucoside + malonyl-CoA = a flavonol 7-O-(6-O-malonyl-beta-D-glucoside) + CoA. Its function is as follows. Malonyltransferase acting on xenobiotic glucosides. Has activity toward 2-Naphthol glucoside (2NAG), 1-Naphthol glucoside (1NAG), kaempferol 7-O-glucoside, hydroxycoumarin glucosides and phenol-glucosides, but not toward kaempferol 3-O-glucoside or daidzin. Prefers phenol glucosides rather than naphtol glucosides. In vivo, seems to be involved in the malonylation of 4-methylumbelliferone glucoside or 4-nitrophenyl glucoside while PMAT1 would be involved in the malonylation of 2-Naphthol glucoside. This is Phenolic glucoside malonyltransferase 2 (PMAT2) from Arabidopsis thaliana (Mouse-ear cress).